The chain runs to 313 residues: Protein EMSY-LIKE 2 (313 aa).

Positions 1–88 constitute an ENT domain; the sequence is MEAQIHILEQ…HQSLDVHPSP (88 aa). A coiled-coil region spans residues 35–58; that stretch reads MTNLRKELRISDDENRQLLNNVHN. 2 disordered regions span residues 84-106 and 195-229; these read VHPSPTFSASRKKQKTFQSYPSI and LNVGHGGGTTRGNRRTLSHGGRGRGPRTQPRREHL. Residues 206-219 show a composition bias toward basic residues; it reads GNRRTLSHGGRGRG. Positions 267 to 293 form a coiled coil; it reads HELDKAKKLLKEHEQALIAAIARLTDA. The residue at position 294 (Ser294) is a Phosphoserine. The disordered stretch occupies residues 294–313; it reads SDYESDGEEPYSHELPMLLG.

As to quaternary structure, interacts with EDM2 in nucleus.

The protein resides in the nucleus. Probably involved in the regulation of chromatin states. Contributes to RPP7-mediated and basal immunity, especially against Hyaloperonospora arabidopsidis isolate Hiks1. Regulates negatively EDM2-dependent floral transition. The protein is Protein EMSY-LIKE 2 of Arabidopsis thaliana (Mouse-ear cress).